A 249-amino-acid chain; its full sequence is UDP-N-acetyl-D-mannosaminuronic acid transferase (249 aa).

Belongs to the glycosyltransferase 26 family.

It catalyses the reaction UDP-N-acetyl-alpha-D-mannosaminouronate + N-acetyl-alpha-D-glucosaminyl-di-trans,octa-cis-undecaprenyl diphosphate = beta-D-ManNAcA-(1-&gt;4)-alpha-D-GlcNAc-di-trans,octa-cis-undecaprenyl diphosphate + UDP + H(+). It participates in bacterial outer membrane biogenesis; enterobacterial common antigen biosynthesis. Its function is as follows. Catalyzes the synthesis of Und-PP-GlcNAc-ManNAcA (Lipid II), the second lipid-linked intermediate involved in enterobacterial common antigen (ECA) synthesis. This Pectobacterium carotovorum subsp. carotovorum (strain PC1) protein is UDP-N-acetyl-D-mannosaminuronic acid transferase.